Consider the following 512-residue polypeptide: MEESQRYLQLERSQQHDFLYPLIFQEYIYAFAYDRGFSRSSLSENPSYNNKSSLLIVKRLITRMYQQNHFIIYYPNDSNQNTFWARRNNLYSPIISEGFAFIVEIPFSLGLIYCLEGKNKKIVKSQNLRSIHSIFPFLEDNFSHLNFVLDILIPQPVHVEILVQTLRCRVKDASSLHLLRFFLNEYCNSKSLITPQKASSSFSKKNKRLFLFLYNSHLCEYESIFVFLRTKSSHLRSTSLGVLLERIYFYGKIERVVNIFVKVKDFQANLRLVKEPCMHYIRYQRKSILASKGTSLFMNKWKSYLVAFWQWHFSQWFHPRRIYINHISNHSLEFLGYLSNVRMNPSVVRSQIIENSFLINNAIKKVDTLIPIIPLIAAXXKAKFXNVLGHPIXKSVRADLSDFNIIDRFGRICRNLSHYYSGSSKKKSLYRIKYILRLSCARTLARKHKSTVRTFLKRLGSEFLEEFLMSEEDVLFFTFPKASSTLWGVYRSRIWYLDIISINDLANHKSKL.

This sequence belongs to the intron maturase 2 family. MatK subfamily.

It localises to the plastid. It is found in the chloroplast. Functionally, usually encoded in the trnK tRNA gene intron. Probably assists in splicing its own and other chloroplast group II introns. This chain is Maturase K, found in Erythranthe guttata (Yellow monkey flower).